A 155-amino-acid polypeptide reads, in one-letter code: Transcriptional repressor NrdR (155 aa).

A zinc finger spans residues 3-34 (CPFCGNIDTQVKDSRPAEDHVSIRRRRFCPAC). The region spanning 49-139 (LVVIKSSGKR…VYKNFQAADD (91 aa)) is the ATP-cone domain.

It belongs to the NrdR family. Zn(2+) is required as a cofactor.

Its function is as follows. Negatively regulates transcription of bacterial ribonucleotide reductase nrd genes and operons by binding to NrdR-boxes. This is Transcriptional repressor NrdR from Cereibacter sphaeroides (strain ATCC 17025 / ATH 2.4.3) (Rhodobacter sphaeroides).